The chain runs to 147 residues: Riboflavin kinase (147 aa).

15–20 is a CDP binding site; the sequence is GLGEGR. Residues T44 and N46 each contribute to the Mg(2+) site. FMN-binding residues include T97 and E104. 109–112 serves as a coordination point for CDP; that stretch reads TELR.

Belongs to the archaeal riboflavin kinase family. It depends on Mg(2+) as a cofactor.

It carries out the reaction riboflavin + CTP = CDP + FMN + H(+). The protein operates within cofactor biosynthesis; FMN biosynthesis; FMN from riboflavin (CTP route): step 1/1. Catalyzes the CTP-dependent phosphorylation of riboflavin (vitamin B2) to form flavin mononucleotide (FMN). The protein is Riboflavin kinase of Methanopyrus kandleri (strain AV19 / DSM 6324 / JCM 9639 / NBRC 100938).